We begin with the raw amino-acid sequence, 403 residues long: Ribosomal RNA large subunit methyltransferase I (403 aa).

One can recognise a PUA domain in the interval 9-88 (YPRLVLSKGR…ESIDIAFFTR (80 aa)).

Belongs to the methyltransferase superfamily. RlmI family.

It localises to the cytoplasm. It carries out the reaction cytidine(1962) in 23S rRNA + S-adenosyl-L-methionine = 5-methylcytidine(1962) in 23S rRNA + S-adenosyl-L-homocysteine + H(+). Functionally, specifically methylates the cytosine at position 1962 (m5C1962) of 23S rRNA. The protein is Ribosomal RNA large subunit methyltransferase I of Salmonella enteritidis PT4 (strain P125109).